Consider the following 231-residue polypeptide: RING finger protein 141 (231 aa).

Residue G2 is the site of N-myristoyl glycine attachment. The RING-type zinc finger occupies 156–193 (CCICMDGRADLILPCAHSFCQKCIDKWSDRHRNCPICR).

It is found in the membrane. In terms of biological role, may be involved in spermatogenesis. This chain is RING finger protein 141 (RNF141), found in Canis lupus familiaris (Dog).